A 444-amino-acid chain; its full sequence is UPF0761 membrane protein RC1_0578 (444 aa).

The next 6 helical transmembrane spans lie at 49 to 69, 103 to 123, 145 to 165, 186 to 206, 219 to 239, and 248 to 268; these read LLALVPLLTVTFAIFSAFPAY, AAALTGFGVIGLSLTSILLFF, LLSFWAVLTIMPLLLGASLSV, FMLPGLLEAAAFTLMFLMIPN, IAAALLMEVSKVGFGLYIAAF, and ALSVIPIFLFWLYTVWSVVLF. The disordered stretch occupies residues 423–444; the sequence is SGQPSGQVETAVRQRTGLQGRI.

This sequence belongs to the UPF0761 family.

The protein localises to the cell inner membrane. The chain is UPF0761 membrane protein RC1_0578 from Rhodospirillum centenum (strain ATCC 51521 / SW).